The chain runs to 329 residues: Malate dehydrogenase (329 aa).

12–18 (GAAGQIG) is a binding site for NAD(+). Positions 93 and 99 each coordinate substrate. Residues Asn106, Gln113, and 130 to 132 (VGN) contribute to the NAD(+) site. Substrate contacts are provided by Asn132 and Arg163. His188 (proton acceptor) is an active-site residue.

This sequence belongs to the LDH/MDH superfamily. MDH type 2 family.

It catalyses the reaction (S)-malate + NAD(+) = oxaloacetate + NADH + H(+). In terms of biological role, catalyzes the reversible oxidation of malate to oxaloacetate. The chain is Malate dehydrogenase from Frankia alni (strain DSM 45986 / CECT 9034 / ACN14a).